The following is a 96-amino-acid chain: Xylulose kinase (96 aa).

Residue 71 to 72 participates in substrate binding; it reads QH.

This sequence belongs to the FGGY kinase family.

It carries out the reaction D-xylulose + ATP = D-xylulose 5-phosphate + ADP + H(+). Catalyzes the phosphorylation of D-xylulose to D-xylulose 5-phosphate. This is Xylulose kinase from Arthrobacter sp. (strain NRRL B3728).